The following is a 538-amino-acid chain: Sensor protein CitS (538 aa).

Residues 1 to 13 (MKRRLFPLTFSAK) are Cytoplasmic-facing. A helical membrane pass occupies residues 14-34 (MMGFIALLIIAMFVLLGVFLN). Residues 35 to 174 (EQYARTLEEQ…DIQQVIGERL (140 aa)) are Extracellular-facing. Residues 175-195 (IAMWQIVVVIMILGLMGTWLV) form a helical membrane-spanning segment. At 196 to 538 (ANTVKKATLG…TIPKHEAKEG (343 aa)) the chain is on the cytoplasmic side. The PAS domain occupies 216–282 (QQKEAILQSI…PEVLQVGKGQ (67 aa)). A Histidine kinase domain is found at 339 to 534 (AQTHEFSNKL…CFVLTIPKHE (196 aa)). A Phosphohistidine; by autocatalysis modification is found at histidine 342.

Its subcellular location is the cell membrane. The enzyme catalyses ATP + protein L-histidine = ADP + protein N-phospho-L-histidine.. Member of the two-component regulatory system CitT/CitS. Functions probably as a membrane-associated protein kinase that phosphorylates CitT in response to environmental citrate or Mg(2+)-citrate complex. The chain is Sensor protein CitS (citS) from Halalkalibacterium halodurans (strain ATCC BAA-125 / DSM 18197 / FERM 7344 / JCM 9153 / C-125) (Bacillus halodurans).